The chain runs to 322 residues: MTSAGPGSDPGTGRAAVVRRLREGMAASVLSFPLTSFHEDGSFDADGYRAYVAERLAAGPGALFPACGTGEFFSLDEDEYRQAVAIAVEETAGSVPVVAGTGYGWAQALRFARIAEDAGADALLVMPHYLTAAPQDGLVAQMERIAAGTRLPLIAYQRGQVAYTAESVRRLTRVPGVIGLKDGHSDLDRLQRAVLAAPDDFLFFNGAATAEVQARAYAAVGVPAYSSAVHAFAPEIANAFLAALRGGDTGTVDKLLRDFYVPLVELRDRVPGYAVSLVKAAARLRGCPVGPVRAPLTDPSPADLAALTTLLTTGLDLVGAAL.

Belongs to the DapA family.

It carries out the reaction 5-dehydro-4-deoxy-D-glucarate + H(+) = 2,5-dioxopentanoate + CO2 + H2O. Its pathway is carbohydrate acid metabolism; D-glucarate degradation; 2,5-dioxopentanoate from D-glucarate: step 2/2. The sequence is that of Probable 5-dehydro-4-deoxyglucarate dehydratase 2 from Streptomyces coelicolor (strain ATCC BAA-471 / A3(2) / M145).